A 124-amino-acid chain; its full sequence is CD59 glycoprotein (124 aa).

The first 24 residues, Met1 to Ser24, serve as a signal peptide directing secretion. Residues Ser25–Gly101 form the UPAR/Ly6 domain. 5 cysteine pairs are disulfide-bonded: Cys28–Cys51, Cys31–Cys38, Cys44–Cys64, Cys70–Cys88, and Cys89–Cys94. Asn37 carries N-linked (GlcNAc...) asparagine glycosylation. The GPI-anchor amidated glycine moiety is linked to residue Gly101. Residues Thr102 to Leu124 constitute a propeptide, removed in mature form.

In terms of assembly, interacts with T-cell surface antigen CD2. Post-translationally, N- and O-glycosylated.

It localises to the cell membrane. It is found in the secreted. In terms of biological role, potent inhibitor of the complement membrane attack complex (MAC) action, which protects self-cells from damage during complement activation. Acts by binding to the beta-haipins of C8 (C8A and C8B) components of the assembling MAC, forming an intermolecular beta-sheet that prevents incorporation of the multiple copies of C9 required for complete formation of the osmolytic pore. The polypeptide is CD59 glycoprotein (Oryctolagus cuniculus (Rabbit)).